Consider the following 431-residue polypeptide: Glutamate-1-semialdehyde 2,1-aminomutase (431 aa).

Lys265 carries the N6-(pyridoxal phosphate)lysine modification.

Belongs to the class-III pyridoxal-phosphate-dependent aminotransferase family. HemL subfamily. In terms of assembly, homodimer. Pyridoxal 5'-phosphate serves as cofactor.

The protein localises to the cytoplasm. It catalyses the reaction (S)-4-amino-5-oxopentanoate = 5-aminolevulinate. It participates in porphyrin-containing compound metabolism; protoporphyrin-IX biosynthesis; 5-aminolevulinate from L-glutamyl-tRNA(Glu): step 2/2. The polypeptide is Glutamate-1-semialdehyde 2,1-aminomutase (Aliivibrio fischeri (strain MJ11) (Vibrio fischeri)).